The chain runs to 152 residues: Nucleoside diphosphate kinase B (152 aa).

An interaction with AKAP13 region spans residues 1 to 66 (MANLERTFIA…DRPFFPGLVK (66 aa)). Residues Lys-12, Phe-60, Arg-88, Thr-94, Arg-105, and Asn-115 each coordinate ATP. Residue His-118 is the Pros-phosphohistidine intermediate of the active site.

Belongs to the NDK family. Hexamer of two different chains: An and B (A6, A5B, A4B2, A3B3, A2B4, AB5, B6). Interacts with CAPN8. Interacts with AKAP13. Interacts with ITGB1BP1 (via C-terminal domain region). Interacts with BCL2L10. The cofactor is Mg(2+). As to expression, expressed in the base region of the oxyntic and pyloric mucosae.

The protein resides in the cytoplasm. It is found in the cell projection. The protein localises to the lamellipodium. Its subcellular location is the ruffle. It localises to the nucleus. The catalysed reaction is a 2'-deoxyribonucleoside 5'-diphosphate + ATP = a 2'-deoxyribonucleoside 5'-triphosphate + ADP. It carries out the reaction a ribonucleoside 5'-diphosphate + ATP = a ribonucleoside 5'-triphosphate + ADP. The enzyme catalyses ATP + protein L-histidine = ADP + protein N-phospho-L-histidine.. Major role in the synthesis of nucleoside triphosphates other than ATP. The ATP gamma phosphate is transferred to the NDP beta phosphate via a ping-pong mechanism, using a phosphorylated active-site intermediate. Negatively regulates Rho activity by interacting with AKAP13/LBC. Acts as a transcriptional activator of the MYC gene; binds DNA non-specifically. Binds to both single-stranded guanine- and cytosine-rich strands within the nuclease hypersensitive element (NHE) III(1) region of the MYC gene promoter. Does not bind to duplex NHE III(1). Has G-quadruplex (G4) DNA-binding activity, which is independent of its nucleotide-binding and kinase activity. Binds both folded and unfolded G4 with similar low nanomolar affinities. Stabilizes folded G4s regardless of whether they are prefolded or not. Exhibits histidine protein kinase activity. The protein is Nucleoside diphosphate kinase B (Nme2) of Mus musculus (Mouse).